The sequence spans 362 residues: N-alpha-acetyltransferase 30 (362 aa).

Over residues 1–20 (MAEVPPGPSSLLPPPAPPAP) the composition is skewed to pro residues. Disordered regions lie at residues 1–26 (MAEVPPGPSSLLPPPAPPAPAAVEPR), 38–88 (CSED…NGLI), and 113–182 (ATTA…EEDE). Ser39 and Ser55 each carry phosphoserine. Residues 39 to 48 (SEDEEDDEEH) are compositionally biased toward acidic residues. Thr117 bears the Phosphothreonine mark. Low complexity predominate over residues 149–165 (AVPSPVEAAAASDPAAA). Ser152 is modified (phosphoserine). The span at 173 to 182 (TEQEEEEEDE) shows a compositional bias: acidic residues. Phosphoserine is present on residues Ser190, Ser196, and Ser199. The N-acetyltransferase domain occupies 214–362 (RYVRYESELQ…DALRLKLWLR (149 aa)). Lys233 is subject to N6-acetyllysine.

Belongs to the acetyltransferase family. MAK3 subfamily. As to quaternary structure, component of the N-terminal acetyltransferase C (NatC) complex, which is composed of NAA35, NAA38 and NAA30.

The protein localises to the cytoplasm. It is found in the nucleus. The enzyme catalyses N-terminal L-methionyl-L-leucyl-[protein] + acetyl-CoA = N-terminal N(alpha)-acetyl-L-methionyl-L-leucyl-[protein] + CoA + H(+). It catalyses the reaction N-terminal L-methionyl-L-isoleucyl-[protein] + acetyl-CoA = N-terminal N(alpha)-acetyl-L-methionyl-L-isoleucyl-[protein] + CoA + H(+). It carries out the reaction N-terminal L-methionyl-L-phenylalanyl-[protein] + acetyl-CoA = N-terminal N(alpha)-acetyl-L-methionyl-L-phenylalanyl-[protein] + CoA + H(+). The catalysed reaction is N-terminal L-methionyl-L-tryptophyl-[protein] + acetyl-CoA = N-terminal N(alpha)-acetyl-L-methionyl-L-tryptophyl-[protein] + CoA + H(+). The enzyme catalyses N-terminal L-methionyl-L-tyrosyl-[protein] + acetyl-CoA = N-terminal N(alpha)-acetyl-L-methionyl-L-tyrosyl-[protein] + CoA + H(+). In terms of biological role, catalytic subunit of the N-terminal acetyltransferase C (NatC) complex. Catalyzes acetylation of the N-terminal methionine residues of peptides beginning with Met-Leu-Ala and Met-Leu-Gly. N-terminal acetylation protects proteins from ubiquitination and degradation by the N-end rule pathway. Necessary for the lysosomal localization and function of ARL8B sugeesting that ARL8B is a NatC substrate. The chain is N-alpha-acetyltransferase 30 (NAA30) from Homo sapiens (Human).